Consider the following 429-residue polypeptide: Enolase 2 (429 aa).

Glutamine 163 is a binding site for (2R)-2-phosphoglycerate. The Proton donor role is filled by glutamate 205. Residues aspartate 242, glutamate 286, and aspartate 313 each coordinate Mg(2+). (2R)-2-phosphoglycerate-binding residues include lysine 338, arginine 367, serine 368, and lysine 389. Lysine 338 functions as the Proton acceptor in the catalytic mechanism.

This sequence belongs to the enolase family. Mg(2+) is required as a cofactor.

It is found in the cytoplasm. The protein localises to the secreted. Its subcellular location is the cell surface. The catalysed reaction is (2R)-2-phosphoglycerate = phosphoenolpyruvate + H2O. Its pathway is carbohydrate degradation; glycolysis; pyruvate from D-glyceraldehyde 3-phosphate: step 4/5. Catalyzes the reversible conversion of 2-phosphoglycerate (2-PG) into phosphoenolpyruvate (PEP). It is essential for the degradation of carbohydrates via glycolysis. This chain is Enolase 2, found in Lactiplantibacillus plantarum (strain ATCC BAA-793 / NCIMB 8826 / WCFS1) (Lactobacillus plantarum).